The chain runs to 364 residues: Alanine racemase (364 aa).

Residue K35 is the Proton acceptor; specific for D-alanine of the active site. The residue at position 35 (K35) is an N6-(pyridoxal phosphate)lysine. R131 serves as a coordination point for substrate. The active-site Proton acceptor; specific for L-alanine is Y256. M304 serves as a coordination point for substrate.

The protein belongs to the alanine racemase family. Requires pyridoxal 5'-phosphate as cofactor.

The catalysed reaction is L-alanine = D-alanine. Its pathway is amino-acid biosynthesis; D-alanine biosynthesis; D-alanine from L-alanine: step 1/1. Catalyzes the interconversion of L-alanine and D-alanine. May also act on other amino acids. In Halorhodospira halophila (strain DSM 244 / SL1) (Ectothiorhodospira halophila (strain DSM 244 / SL1)), this protein is Alanine racemase (alr).